We begin with the raw amino-acid sequence, 115 residues long: Migration and invasion enhancer 1 (115 aa).

An N-acetylserine modification is found at Ser2. A disulfide bridge links Cys30 with Cys33. The S-geranylgeranyl cysteine moiety is linked to residue Cys112. A propeptide spans 113 to 115 (VIL) (removed in mature form).

Belongs to the SelWTH family. Interacts with GPX1. Post-translationally, isoprenylation facilitates association with the plasma membrane and enhances the migratory phenotype of cells by inducing increased filopodia formation. Widely expressed with highest levels in kidney followed by brain and testis.

It is found in the cytoplasm. The protein resides in the cytosol. The protein localises to the cell membrane. Increases cell migration by inducing filopodia formation at the leading edge of migrating cells. Plays a role in regulation of apoptosis, possibly through control of CASP3. May be involved in a redox-related process. The protein is Migration and invasion enhancer 1 (Mien1) of Mus musculus (Mouse).